Consider the following 214-residue polypeptide: Large ribosomal subunit protein uL4 (214 aa).

A disordered region spans residues 43–83 (RRQAGTHKAKSRSEVNRTTKKSIKQKGSGGARHGSRNAPIF).

It belongs to the universal ribosomal protein uL4 family. Part of the 50S ribosomal subunit.

Functionally, one of the primary rRNA binding proteins, this protein initially binds near the 5'-end of the 23S rRNA. It is important during the early stages of 50S assembly. It makes multiple contacts with different domains of the 23S rRNA in the assembled 50S subunit and ribosome. In terms of biological role, forms part of the polypeptide exit tunnel. The chain is Large ribosomal subunit protein uL4 from Hyphomonas neptunium (strain ATCC 15444).